A 104-amino-acid chain; its full sequence is Small ubiquitin-related modifier 3 (104 aa).

Glycyl lysine isopeptide (Lys-Gly) (interchain with G-Cter in SUMO2) cross-links involve residues lysine 5 and lysine 7. A Glycyl lysine isopeptide (Lys-Gly) (interchain with G-Cter in SUMO); alternate cross-link involves residue lysine 11. A Glycyl lysine isopeptide (Lys-Gly) (interchain with G-Cter in SUMO2); alternate cross-link involves residue lysine 11. Residues aspartate 15 to glycine 92 form the Ubiquitin-like domain. Glycine 92 participates in a covalent cross-link: Glycyl lysine isopeptide (Gly-Lys) (interchain with K-? in acceptor proteins). A propeptide spanning residues serine 93–leucine 104 is cleaved from the precursor.

Belongs to the ubiquitin family. SUMO subfamily. Interacts with SAE2 and UBE2I. Covalently attached to a number of proteins. Interacts with USP25 (via ts SIM domain); the interaction sumoylates USP25 and inhibits its ubiquitin hydrolyzing activity. Interacts with BMAL1. Polymeric chains can be formed through Lys-11 cross-linking. Post-translationally, cleavage of precursor form by SENP1, SENP2 or SENP5 is necessary for function.

The protein localises to the cytoplasm. It localises to the nucleus. It is found in the PML body. In terms of biological role, ubiquitin-like protein which can be covalently attached to target lysines either as a monomer or as a lysine-linked polymer. Does not seem to be involved in protein degradation and may function as an antagonist of ubiquitin in the degradation process. Plays a role in a number of cellular processes such as nuclear transport, DNA replication and repair, mitosis and signal transduction. Covalent attachment to its substrates requires prior activation by the E1 complex SAE1-SAE2 and linkage to the E2 enzyme UBE2I, and can be promoted by an E3 ligase such as PIAS1-4, RANBP2 or CBX4. Plays a role in the regulation of sumoylation status of SETX. This chain is Small ubiquitin-related modifier 3 (SUMO3), found in Bos taurus (Bovine).